A 430-amino-acid polypeptide reads, in one-letter code: CinA-like protein (430 aa).

The protein belongs to the CinA family.

This chain is CinA-like protein, found in Mycobacterium tuberculosis (strain ATCC 25177 / H37Ra).